A 541-amino-acid polypeptide reads, in one-letter code: Tyrosine-protein kinase Yes (541 aa).

The segment covering 1-10 (MGCIKSKENK) has biased composition (basic and acidic residues). Residues 1–29 (MGCIKSKENKSPAIKYTPENPTEPVNTSA) are disordered. Gly2 is lipidated: N-myristoyl glycine. Cys3 carries S-palmitoyl cysteine; in membrane form lipidation. Residues 19 to 29 (ENPTEPVNTSA) are compositionally biased toward polar residues. Tyr32 carries the phosphotyrosine modification. The SH3 domain occupies 89–150 (GGVTIFVALY…PSNYVAPADS (62 aa)). The 98-residue stretch at 156–253 (WYFGKMGRKD…GLCHKLTTVC (98 aa)) folds into the SH2 domain. The 254-residue stretch at 275–528 (LRLEVKLGQG…YIQSFLEDYF (254 aa)) folds into the Protein kinase domain. ATP is bound by residues 281–289 (LGQGCFGEV) and Lys303. Phosphotyrosine is present on residues Tyr334 and Tyr343. Asp394 acts as the Proton acceptor in catalysis. A Phosphotyrosine; by autocatalysis modification is found at Tyr424. Tyr535 carries the post-translational modification Phosphotyrosine.

As to quaternary structure, interacts with YAP1 and CSF1R. Interacts with FASLG. Interacts with CTNND1; this interaction allows YES1-mediated activation of FYN and FER and subsequent phosphorylation of CTNND1. Interacts with IL6ST/gp130. Interacts with SCRIB, when YES1 is in a closed conformation; the interaction facilitates YES1 autophosphorylation. Phosphorylated. Phosphorylation by CSK on the C-terminal tail maintains the enzyme in an inactive state. Autophosphorylation at Tyr-424 maintains enzyme activity by blocking CSK-mediated inhibition. Post-translationally, palmitoylation at Cys-3 promotes membrane localization.

It localises to the cell membrane. The protein localises to the cytoplasm. The protein resides in the cytoskeleton. It is found in the microtubule organizing center. Its subcellular location is the centrosome. It localises to the cytosol. The protein localises to the cell junction. The catalysed reaction is L-tyrosyl-[protein] + ATP = O-phospho-L-tyrosyl-[protein] + ADP + H(+). Its function is as follows. Non-receptor protein tyrosine kinase that is involved in the regulation of cell growth and survival, apoptosis, cell-cell adhesion, cytoskeleton remodeling, and differentiation. Stimulation by receptor tyrosine kinases (RTKs) including EGFR, PDGFR, CSF1R and FGFR leads to recruitment of YES1 to the phosphorylated receptor, and activation and phosphorylation of downstream substrates. Upon EGFR activation, promotes the phosphorylation of PARD3 to favor epithelial tight junction assembly. Participates in the phosphorylation of specific junctional components such as CTNND1 by stimulating the FYN and FER tyrosine kinases at cell-cell contacts. Upon T-cell stimulation by CXCL12, phosphorylates collapsin response mediator protein 2/DPYSL2 and induces T-cell migration. Participates in CD95L/FASLG signaling pathway and mediates AKT-mediated cell migration. Plays a role in cell cycle progression by phosphorylating the cyclin dependent kinase 4/CDK4 thus regulating the G1 phase. Also involved in G2/M progression and cytokinesis. Catalyzes phosphorylation of organic cation transporter OCT2 which induces its transport activity. The chain is Tyrosine-protein kinase Yes (Yes1) from Rattus norvegicus (Rat).